The chain runs to 94 residues: MARVTVEDAVKQVGNRFDLVLVAARRARQLAVQGKEPLVDEENDKPTVIALREIEEGLISNQFMDAQERIEQQQQEASELAAVAALTQDRDYGF.

This sequence belongs to the RNA polymerase subunit omega family. As to quaternary structure, the RNAP catalytic core consists of 2 alpha, 1 beta, 1 beta' and 1 omega subunit. When a sigma factor is associated with the core the holoenzyme is formed, which can initiate transcription.

The enzyme catalyses RNA(n) + a ribonucleoside 5'-triphosphate = RNA(n+1) + diphosphate. Promotes RNA polymerase assembly. Latches the N- and C-terminal regions of the beta' subunit thereby facilitating its interaction with the beta and alpha subunits. In Tolumonas auensis (strain DSM 9187 / NBRC 110442 / TA 4), this protein is DNA-directed RNA polymerase subunit omega.